Here is a 465-residue protein sequence, read N- to C-terminus: 3-isopropylmalate dehydratase large subunit (465 aa).

3 residues coordinate [4Fe-4S] cluster: Cys-347, Cys-407, and Cys-410. Residues 416 to 443 (DTLRPGERSASTSNRNFEGRQGPGGRTH) are disordered.

The protein belongs to the aconitase/IPM isomerase family. LeuC type 1 subfamily. In terms of assembly, heterodimer of LeuC and LeuD. Requires [4Fe-4S] cluster as cofactor.

It catalyses the reaction (2R,3S)-3-isopropylmalate = (2S)-2-isopropylmalate. It functions in the pathway amino-acid biosynthesis; L-leucine biosynthesis; L-leucine from 3-methyl-2-oxobutanoate: step 2/4. Functionally, catalyzes the isomerization between 2-isopropylmalate and 3-isopropylmalate, via the formation of 2-isopropylmaleate. This is 3-isopropylmalate dehydratase large subunit from Frankia alni (strain DSM 45986 / CECT 9034 / ACN14a).